The chain runs to 148 residues: Large ribosomal subunit protein uL22c (148 aa).

This sequence belongs to the universal ribosomal protein uL22 family. As to quaternary structure, part of the 50S ribosomal subunit.

Its subcellular location is the plastid. The protein resides in the chloroplast. In terms of biological role, this protein binds specifically to 23S rRNA. Functionally, the globular domain of the protein is located near the polypeptide exit tunnel on the outside of the subunit, while an extended beta-hairpin is found that lines the wall of the exit tunnel in the center of the 70S ribosome. This is Large ribosomal subunit protein uL22c (rpl22) from Zea mays (Maize).